We begin with the raw amino-acid sequence, 459 residues long: MAFYSYNSFLAIFWTRLPGHSVHPPCSHFPPLAFFHLPDSHLRTAYMKNCGSRKYSYPGLTGNNKVHPLRTRLPQKLHTTCWLQNHPGKPQPEQIPEEPKATDPQPTKDDQTEVAEGKWSLRQKIIDEVKYYYNGFSLLWIDTKVAARIVWRLLHGQVLTRRERRRLLRTCADVFRLVPFVVFIIVPFMEFLIPVFLKLFPDMLPSTFESESKKEEKQKKMMGAKLEIAKFLQETMTEMAKRNRAKLDDDSSDSSQLSSYVKQVQTGHKPSTKEIVRFSKLFEDQLALEHLRRPQLVALCKLLELQAFGTNNLLRFQLLMTLRSIKADDEVIAKEGVKALSVSELQAACRARGMRSLGLTEEQLRQQLTEWLDLHLKENVPPSLLLLSRTFYLIDVKPKPIELPPSIETPKTNLGIPSSPPPESKEDITDPAPQLNGTKILQAKSQETSQNSKANSKGA.

The transit peptide at methionine 1–proline 25 directs the protein to the mitochondrion. Over cysteine 26 to arginine 176 the chain is Mitochondrial intermembrane. Positions glycine 88–valine 114 are disordered. Residues glutamate 97–glutamine 111 show a composition bias toward basic and acidic residues. Residues leucine 177–leucine 197 form a helical membrane-spanning segment. The Mitochondrial matrix portion of the chain corresponds to lysine 198 to alanine 459. Positions lysine 220–isoleucine 440 constitute a Letm1 RBD domain. The disordered stretch occupies residues leucine 403–alanine 459. The segment covering leucine 435–alanine 459 has biased composition (polar residues).

Testis and sperm.

It localises to the mitochondrion inner membrane. This is LETM1 domain-containing protein LETM2, mitochondrial (Letm2) from Rattus norvegicus (Rat).